The following is a 373-amino-acid chain: Chaperone protein DnaJ (373 aa).

One can recognise a J domain in the interval Ser-4–Gly-69. The CR-type zinc finger occupies Gly-135–Lys-212. Positions 148, 151, 164, 167, 186, 189, 200, and 203 each coordinate Zn(2+). CXXCXGXG motif repeat units lie at residues Cys-148–Gly-155, Cys-164–Gly-171, Cys-186–Gly-193, and Cys-200–Gly-207.

Belongs to the DnaJ family. Homodimer. Requires Zn(2+) as cofactor.

The protein resides in the cytoplasm. Its function is as follows. Participates actively in the response to hyperosmotic and heat shock by preventing the aggregation of stress-denatured proteins and by disaggregating proteins, also in an autonomous, DnaK-independent fashion. Unfolded proteins bind initially to DnaJ; upon interaction with the DnaJ-bound protein, DnaK hydrolyzes its bound ATP, resulting in the formation of a stable complex. GrpE releases ADP from DnaK; ATP binding to DnaK triggers the release of the substrate protein, thus completing the reaction cycle. Several rounds of ATP-dependent interactions between DnaJ, DnaK and GrpE are required for fully efficient folding. Also involved, together with DnaK and GrpE, in the DNA replication of plasmids through activation of initiation proteins. This chain is Chaperone protein DnaJ, found in Campylobacter jejuni subsp. jejuni serotype O:2 (strain ATCC 700819 / NCTC 11168).